The following is a 136-amino-acid chain: Type II nicking enzyme V.XorIIP (136 aa).

It belongs to the Vsr family.

Functionally, may nick XorII sequences that contain T/G mispairs resulting from m5C-deamination. If unrepaired, these mismatches can lead to C-to-T transition mutations. The very short patch (VSP) repair process counteracts the mutagenic process by repairing the mismatches in favor of the G-containing strand. This enzyme is an endonuclease that nicks double-stranded DNA within the sequence CGATCG (C-methylation site unknown) next to the thymidine residue that is mismatched to 2'-deoxyguanosine. The incision is mismatch-dependent and strand-specific. This is Type II nicking enzyme V.XorIIP from Xanthomonas oryzae pv. oryzae (strain KACC10331 / KXO85).